We begin with the raw amino-acid sequence, 287 residues long: Protease HtpX (287 aa).

2 helical membrane-spanning segments follow: residues isoleucine 4–isoleucine 24 and leucine 36–leucine 56. Histidine 143 provides a ligand contact to Zn(2+). Glutamate 144 is a catalytic residue. Histidine 147 lines the Zn(2+) pocket. 2 helical membrane passes run leucine 158–valine 178 and methionine 192–isoleucine 212. Glutamate 221 serves as a coordination point for Zn(2+).

It belongs to the peptidase M48B family. Zn(2+) serves as cofactor.

The protein resides in the cell inner membrane. This chain is Protease HtpX, found in Vibrio cholerae serotype O1 (strain ATCC 39315 / El Tor Inaba N16961).